Reading from the N-terminus, the 1282-residue chain is Myosin-1 (1282 aa).

A disordered region spans residues 1-30 (MAISKKAGAKKAGAVSKPPPSKGASSKGGV). Residues 44-723 (AGVSDMTLLS…TLFALETMRD (680 aa)) enclose the Myosin motor domain. Residue 137-144 (GESGAGKT) participates in ATP binding. Ser-365 is modified (phosphoserine). The segment at 412-494 (VIGVLDIYGF…PGIFSALNDA (83 aa)) is actin-binding. The disordered stretch occupies residues 569–590 (LQKLFPDRPDPNSKKRPPTAGD). IQ domains are found at residues 727-747 (HNMA…KEEC) and 748-773 (ARRI…YGHQ). The TH1 domain maps to 781-977 (RRRFSLLGLR…AVSVCSGEPA (197 aa)). The interval 973-1073 (SGEPANSVSR…PPPAAVAPSE (101 aa)) is disordered. Residues 1029 to 1058 (PGSGAAGTARPAAAVGSASAGAGVGATRSA) are compositionally biased toward low complexity. Positions 1059 to 1068 (PRPPPPPPAA) are enriched in pro residues. The 62-residue stretch at 1074–1135 (PQVARYKALY…PSNYLELIVQ (62 aa)) folds into the SH3 domain. The disordered stretch occupies residues 1237 to 1282 (AAAAAAGAGANGKGAGAPPAVAAKPVVAPKPAGSNGRAMPPPPPRR). Over residues 1252–1269 (GAPPAVAAKPVVAPKPAG) the composition is skewed to low complexity.

The protein belongs to the TRAFAC class myosin-kinesin ATPase superfamily. Myosin family. In terms of processing, phosphorylation of the TEDS site (Ser-365) is required for the polarization of the actin cytoskeleton. Phosphorylation probably activates the myosin-I ATPase activity.

The protein resides in the cytoplasm. Its subcellular location is the cytoskeleton. It is found in the actin patch. Its function is as follows. Type-I myosin implicated in the organization of the actin cytoskeleton. Required for proper actin cytoskeleton polarization. At the cell cortex, assembles in patch-like structures together with proteins from the actin-polymerizing machinery and promotes actin assembly. Functions as actin nucleation-promoting factor (NPF) for the Arp2/3 complex. This chain is Myosin-1 (myo1), found in Mycosarcoma maydis (Corn smut fungus).